The following is a 321-amino-acid chain: Glutaminase (321 aa).

Substrate contacts are provided by Ser-69, Asn-120, Glu-165, Asn-172, Tyr-196, Tyr-248, and Val-266.

It belongs to the glutaminase family. In terms of assembly, homotetramer.

The enzyme catalyses L-glutamine + H2O = L-glutamate + NH4(+). This is Glutaminase from Parabacteroides distasonis (strain ATCC 8503 / DSM 20701 / CIP 104284 / JCM 5825 / NCTC 11152).